The following is a 588-amino-acid chain: Polyamine deacetylase HDAC10 (588 aa).

The interval 1–302 (MGTALVYHED…AGGRICAVLE (302 aa)) is histone deacetylase. His135 is an active-site residue.

Belongs to the histone deacetylase family. HD type 2 subfamily. In terms of assembly, interacts with HDAC3. Interacts with HDAC2 and NCOR2/SMRT. Interacts with HSPA8/HSC70. Interacts with MSH2.

It localises to the cytoplasm. It is found in the nucleus. The catalysed reaction is N(8)-acetylspermidine + H2O = spermidine + acetate. The enzyme catalyses N-acetylputrescine + H2O = putrescine + acetate. It catalyses the reaction N-acetylcadaverine + H2O = cadaverine + acetate. It carries out the reaction N(6)-acetyl-L-lysyl-[protein] + H2O = L-lysyl-[protein] + acetate. Functionally, polyamine deacetylase (PDAC), which acts preferentially on N(8)-acetylspermidine, and also on acetylcadaverine and acetylputrescine. Exhibits attenuated catalytic activity toward N(1),N(8)-diacetylspermidine and very low activity, if any, toward N(1)-acetylspermidine. Histone deacetylase activity has been observed in vitro. Has also been shown to be involved in MSH2 deacetylation. The physiological relevance of protein/histone deacetylase activity is unclear and could be very weak. May play a role in the promotion of late stages of autophagy, possibly autophagosome-lysosome fusion and/or lysosomal exocytosis in neuroblastoma cells. May play a role in homologous recombination. May promote DNA mismatch repair. This Rattus norvegicus (Rat) protein is Polyamine deacetylase HDAC10 (Hdac10).